The chain runs to 519 residues: Cilia- and flagella-associated protein 53 (519 aa).

Coiled-coil stretches lie at residues 80-107 (NRHLQDALDQYQMGIDEKRERLRELLES) and 210-339 (LAKE…QEEQ). The disordered stretch occupies residues 498 to 519 (TTAVHPFRRRDRRCSSSGGQMS).

It belongs to the CFAP53 family.

The protein resides in the cytoplasm. The protein localises to the cytoskeleton. It localises to the cilium axoneme. It is found in the cilium basal body. Its function is as follows. Microtubule inner protein (MIP) part of the dynein-decorated doublet microtubules (DMTs) in cilia axoneme, which is required for motile cilia beating. Regulates motility patterns of both 9+0 and 9+2 motile cilia through differential localization and recruitment of axonemal dynein components. Required for cilium motility within the spinal canal and Kuppfer's vesicle and is involved in the establishment of left-right symmetry during embryogenesis. This chain is Cilia- and flagella-associated protein 53, found in Danio rerio (Zebrafish).